The chain runs to 423 residues: UPF0229 protein VV1_2091 (423 aa).

The disordered stretch occupies residues 81-111 (QFITGDKIERPKGGQGGGGAGDGDASADGEG). Positions 93 to 102 (GGQGGGGAGD) are enriched in gly residues.

It belongs to the UPF0229 family.

This Vibrio vulnificus (strain CMCP6) protein is UPF0229 protein VV1_2091.